The sequence spans 237 residues: DNA repair protein RecO (237 aa).

Belongs to the RecO family.

Its function is as follows. Involved in DNA repair and RecF pathway recombination. This chain is DNA repair protein RecO, found in Cereibacter sphaeroides (strain ATCC 17025 / ATH 2.4.3) (Rhodobacter sphaeroides).